A 197-amino-acid chain; its full sequence is LexA repressor (197 aa).

Residues 28 to 47 (VREIARRFRITPRGAQLHLV) constitute a DNA-binding region (H-T-H motif). Catalysis depends on for autocatalytic cleavage activity residues Ser119 and Lys156.

This sequence belongs to the peptidase S24 family. Homodimer.

It catalyses the reaction Hydrolysis of Ala-|-Gly bond in repressor LexA.. In terms of biological role, represses a number of genes involved in the response to DNA damage (SOS response), including recA and lexA. In the presence of single-stranded DNA, RecA interacts with LexA causing an autocatalytic cleavage which disrupts the DNA-binding part of LexA, leading to derepression of the SOS regulon and eventually DNA repair. This is LexA repressor from Thermotoga neapolitana.